Here is a 155-residue protein sequence, read N- to C-terminus: Sec-independent protein translocase protein TatB (155 aa).

A helical transmembrane segment spans residues M1–G21. Disordered stretches follow at residues A81–F103 and S131–A155. Residues S89–D98 show a composition bias toward polar residues.

This sequence belongs to the TatB family. In terms of assembly, the Tat system comprises two distinct complexes: a TatABC complex, containing multiple copies of TatA, TatB and TatC subunits, and a separate TatA complex, containing only TatA subunits. Substrates initially bind to the TatABC complex, which probably triggers association of the separate TatA complex to form the active translocon.

The protein localises to the cell inner membrane. Its function is as follows. Part of the twin-arginine translocation (Tat) system that transports large folded proteins containing a characteristic twin-arginine motif in their signal peptide across membranes. Together with TatC, TatB is part of a receptor directly interacting with Tat signal peptides. TatB may form an oligomeric binding site that transiently accommodates folded Tat precursor proteins before their translocation. The chain is Sec-independent protein translocase protein TatB from Polaromonas naphthalenivorans (strain CJ2).